The chain runs to 144 residues: Ribonuclease H (144 aa).

The RNase H type-1 domain maps to 1–141 (MDKIDIYSDG…ADALANRGVE (141 aa)). Positions 9, 47, 69, and 133 each coordinate Mg(2+).

Belongs to the RNase H family. As to quaternary structure, monomer. Requires Mg(2+) as cofactor.

Its subcellular location is the cytoplasm. It catalyses the reaction Endonucleolytic cleavage to 5'-phosphomonoester.. In terms of biological role, endonuclease that specifically degrades the RNA of RNA-DNA hybrids. This chain is Ribonuclease H, found in Janthinobacterium sp. (strain Marseille) (Minibacterium massiliensis).